The primary structure comprises 156 residues: ATP synthase subunit b (156 aa).

A helical membrane pass occupies residues 5–25 (LTLIGQAIAFAFFVAFCMKFV).

It belongs to the ATPase B chain family. F-type ATPases have 2 components, F(1) - the catalytic core - and F(0) - the membrane proton channel. F(1) has five subunits: alpha(3), beta(3), gamma(1), delta(1), epsilon(1). F(0) has three main subunits: a(1), b(2) and c(10-14). The alpha and beta chains form an alternating ring which encloses part of the gamma chain. F(1) is attached to F(0) by a central stalk formed by the gamma and epsilon chains, while a peripheral stalk is formed by the delta and b chains.

It localises to the cell inner membrane. F(1)F(0) ATP synthase produces ATP from ADP in the presence of a proton or sodium gradient. F-type ATPases consist of two structural domains, F(1) containing the extramembraneous catalytic core and F(0) containing the membrane proton channel, linked together by a central stalk and a peripheral stalk. During catalysis, ATP synthesis in the catalytic domain of F(1) is coupled via a rotary mechanism of the central stalk subunits to proton translocation. In terms of biological role, component of the F(0) channel, it forms part of the peripheral stalk, linking F(1) to F(0). The polypeptide is ATP synthase subunit b (Acinetobacter baumannii (strain AYE)).